A 62-amino-acid chain; its full sequence is Photosystem II reaction center X protein (62 aa).

Residues 26–46 traverse the membrane as a helical segment; the sequence is IASFFAAALLIVIPAATFLIF.

Belongs to the PsbX family. Type 2 subfamily. As to quaternary structure, PSII consists of a core antenna complex that captures photons, and an electron transfer chain that converts photonic excitation into a charge separation. PSII forms dimeric complexes.

The protein localises to the cellular thylakoid membrane. In terms of biological role, involved in the binding and/or turnover of quinones at the Q(B) site of Photosystem II. This chain is Photosystem II reaction center X protein, found in Prochlorococcus marinus (strain MIT 9515).